The chain runs to 325 residues: Glucosyl-3-phosphoglycerate synthase (325 aa).

UDP-alpha-D-glucose contacts are provided by residues 37 to 41 (PSLNE), Ser71, Lys104, and 124 to 125 (DS). A Mn(2+)-binding site is contributed by Asp126. Residue 171 to 174 (GRVT) participates in (2R)-3-phosphoglycerate binding. UDP-alpha-D-glucose contacts are provided by residues 216 to 219 (YGVE) and 243 to 248 (RIHDNQ). His245 provides a ligand contact to Mn(2+). Asn247 is a binding site for (2R)-3-phosphoglycerate.

It belongs to the glycosyltransferase 2 family. Homodimer in solution. The cofactor is Co(2+). Requires Mg(2+) as cofactor. Mn(2+) serves as cofactor. It depends on Ni(2+) as a cofactor. Zn(2+) is required as a cofactor.

It catalyses the reaction an NDP-alpha-D-glucose + (2R)-3-phosphoglycerate = (2R)-2-O-(alpha-D-glucopyranosyl)-3-phospho-glycerate + a ribonucleoside 5'-diphosphate + H(+). The enzyme catalyses (2R)-3-phosphoglycerate + UDP-alpha-D-glucose = (2R)-2-O-(alpha-D-glucopyranosyl)-3-phospho-glycerate + UDP + H(+). The catalysed reaction is ADP-alpha-D-glucose + (2R)-3-phosphoglycerate = (2R)-2-O-(alpha-D-glucopyranosyl)-3-phospho-glycerate + ADP + H(+). Its activity is regulated as follows. Inhibited by ADP and EDTA. Functionally, involved in the biosynthesis of the compatible solute mannosylglucosylglycerate through a phosphorylating pathway. Catalyzes the transfer of the glucose moiety from a nuleotide sugar such as UDP-alpha-D-glucose to the position 2 of 3-phospho-D-glycerate (3-PGA) to form glucosyl-3-phosphoglycerate (GPG). UDP-glucose is the preferred substrate, but it can be partially replaced by ADP-glucose. The polypeptide is Glucosyl-3-phosphoglycerate synthase (Petrotoga mobilis (strain DSM 10674 / SJ95)).